A 321-amino-acid polypeptide reads, in one-letter code: Trem-like transcript 2 protein (321 aa).

The N-terminal stretch at 1-18 (MAPAFLLLLLLWPQGCVS) is a signal peptide. Topologically, residues 19 to 268 (GPSADSVYTK…PSIRHQDVYS (250 aa)) are extracellular. Residues 20 to 121 (PSADSVYTKV…ILYPLMGFQL (102 aa)) form the Ig-like V-type domain. 2 cysteine pairs are disulfide-bonded: cysteine 41–cysteine 105 and cysteine 56–cysteine 63. Asparagine 89 carries N-linked (GlcNAc...) asparagine glycosylation. Polar residues-rich tracts occupy residues 189–220 (GYSF…NARD) and 227–241 (SIST…RSPT). Positions 189–241 (GYSFTATSTTSQGPRRTMGSQTVTASPSNARDSSAGPESISTKSGDLSTRSPT) are disordered. Residues 269–289 (TVLGVVLTLLVLMLIMVYGFW) traverse the membrane as a helical segment. The Cytoplasmic segment spans residues 290–321 (KKRHMASYSMCSDPSTRDPPGRPEPYVEVYLI).

In terms of assembly, interacts with CD276 and this interaction enhances T-cell activation. As to expression, detected in cultured B-cells, T-cell leukemia and monocyte leukemia. Expressed constitutively on CD8 T-cells and induced on CD4 T-cells after activation.

The protein resides in the cell membrane. Cell surface receptor that may play a role in the innate and adaptive immune response. Acts as a counter-receptor for CD276 and interaction with CD276 on T-cells enhances T-cell activation. This chain is Trem-like transcript 2 protein (TREML2), found in Homo sapiens (Human).